Consider the following 139-residue polypeptide: Flagellar assembly factor FliW 2 (139 aa).

The protein belongs to the FliW family. Interacts with translational regulator CsrA and flagellin(s).

Its subcellular location is the cytoplasm. Functionally, acts as an anti-CsrA protein, binds CsrA and prevents it from repressing translation of its target genes, one of which is flagellin. Binds to flagellin and participates in the assembly of the flagellum. This Helicobacter hepaticus (strain ATCC 51449 / 3B1) protein is Flagellar assembly factor FliW 2.